The primary structure comprises 166 residues: Myeloid-derived growth factor (166 aa).

The N-terminal stretch at 1–24 (MAAPSGGFWTAVVLAAAALKLAAA) is a signal peptide.

The protein belongs to the MYDGF family. Expressed in prostate, spleen and lung, and weakly expressed in the left ventricle (LF) and liver. Expressed predominantly in inflammatory cells, such as monocytes and macrophages, and weakly expressed in neutrophils, T-cells, B-cells, endothelial cells and cardiac myocytes, after myocardial infarction (MI) (at protein level).

It localises to the secreted. The protein localises to the endoplasmic reticulum-Golgi intermediate compartment. The protein resides in the endoplasmic reticulum. Its subcellular location is the golgi apparatus. Functionally, bone marrow-derived monocyte and paracrine-acting protein that promotes cardiac myocyte survival and adaptive angiogenesis for cardiac protection and/or repair after myocardial infarction (MI). Stimulates endothelial cell proliferation through a MAPK1/3-, STAT3- and CCND1-mediated signaling pathway. Inhibits cardiac myocyte apoptosis in a PI3K/AKT-dependent signaling pathway. The protein is Myeloid-derived growth factor of Mus musculus (Mouse).